Consider the following 176-residue polypeptide: Protein FimF (176 aa).

The N-terminal stretch at 1-20 (MRNKPFYLLCAFLWLAVSHA) is a signal peptide. Cys38 and Cys78 are oxidised to a cystine.

Belongs to the fimbrial protein family.

It is found in the fimbrium. Functionally, involved in regulation of length and mediation of adhesion of type 1 fimbriae (but not necessary for the production of fimbriae). Involved in the integration of FimH in the fimbriae. This chain is Protein FimF (fimF), found in Escherichia coli (strain K12).